An 87-amino-acid polypeptide reads, in one-letter code: Small ribosomal subunit protein bS20 (87 aa).

Residues 1-21 (MANHKSAEKRARQTIKKTERN) are disordered.

The protein belongs to the bacterial ribosomal protein bS20 family.

Functionally, binds directly to 16S ribosomal RNA. This chain is Small ribosomal subunit protein bS20, found in Campylobacter jejuni subsp. jejuni serotype O:23/36 (strain 81-176).